The chain runs to 995 residues: Putative pentatricopeptide repeat-containing protein At5g09950 (995 aa).

PPR repeat units follow at residues 35 to 65, 66 to 100, 101 to 137, 138 to 169, 170 to 204, 205 to 241, 242 to 276, 278 to 303, 307 to 342, 348 to 378, 379 to 413, 414 to 448, 449 to 483, 484 to 515, 516 to 550, 551 to 581, 583 to 617, 618 to 652, 653 to 683, 684 to 718, 720 to 750, and 756 to 786; these read DVYLCNNLINAYLETGDSVSARKVFDEMPLR, NCVSWACIVSGYSRNGEHKEALVFLRDMVKEGIFS, NQYAFVSVLRACQEIGSVGILFGRQIHGLMFKLSYAV, DAVVSNVLISMYWKCIGSVGYALCAFGDIEVK, NSVSWNSIISVYSQAGDQRSAFRIFSSMQYDGSRP, TEYTFGSLVTTACSLTEPDVRLLEQIMCTIQKSGLLT, DLFVGSGLVSAFAKSGSLSYARKVFNQMETRNAVT, NGLMVGLVRQKWGEEATKLFMDMNSM, SPESYVILLSSFPEYSLAEEVGLKKGREVHGHVITT, MVGIGNGLVNMYAKCGSIADARRVFYFMTDK, DSVSWNSMITGLDQNGCFIEAVERYKSMRRHDILP, GSFTLISSLSSCASLKWAKLGQQIHGESLKLGIDL, NVSVSNALMTLYAETGYLNECRKIFSSMPEHDQVS, WNSIIGALARSERSLPEAVVCFLNAQRAGQKL, NRITFSSVLSAVSSLSFGELGKQIHGLALKNNIAD, EATTENALIACYGKCGEMDGCEKIFSRMAER, DNVTWNSMISGYIHNELLAKALDLVWFMLQTGQRL, DSFMYATVLSAFASVATLERGMEVHACSVRACLES, DVVVGSALVDMYSKCGRLDYALRFFNTMPVR, NSYSWNSMISGYARHGQGEEALKLFETMKLDGQTP, DHVTFVGVLSACSHAGLLEEGFKHFESMSDS, and RIEHFSCMADVLGRAGELDKLEDFIEKMPMK. Residues 791-868 form a type E motif region; that stretch reads IWRTVLGACC…EAGYSWVTMK (78 aa). The interval 869–899 is type E(+) motif; that stretch reads DGVHMFVAGDKSHPDADVIYKKLKELNRKMR. Residues 900-995 form a type DYW motif region; sequence DAGYVPQTGF…DGACSCSDFW (96 aa).

The protein belongs to the PPR family. PCMP-H subfamily.

This Arabidopsis thaliana (Mouse-ear cress) protein is Putative pentatricopeptide repeat-containing protein At5g09950 (PCMP-H35).